The following is a 934-amino-acid chain: Bifunctional uridylyltransferase/uridylyl-removing enzyme (934 aa).

Positions 1–379 (MSAHDLKLEE…TFSRRKRKLS (379 aa)) are uridylyltransferase. The uridylyl-removing stretch occupies residues 380–736 (DDGAFISENH…AKPHAFEAVT (357 aa)). An HD domain is found at 496–613 (VDEHLLRCIA…IDFADTVQTM (118 aa)). 2 ACT domains span residues 737–818 (EITV…DMLA) and 848–931 (VIEV…RSPQ).

The protein belongs to the GlnD family. Requires Mg(2+) as cofactor.

The enzyme catalyses [protein-PII]-L-tyrosine + UTP = [protein-PII]-uridylyl-L-tyrosine + diphosphate. It catalyses the reaction [protein-PII]-uridylyl-L-tyrosine + H2O = [protein-PII]-L-tyrosine + UMP + H(+). Its activity is regulated as follows. Uridylyltransferase (UTase) activity is inhibited by glutamine, while glutamine activates uridylyl-removing (UR) activity. Its function is as follows. Modifies, by uridylylation and deuridylylation, the PII regulatory proteins (GlnB and homologs), in response to the nitrogen status of the cell that GlnD senses through the glutamine level. Under low glutamine levels, catalyzes the conversion of the PII proteins and UTP to PII-UMP and PPi, while under higher glutamine levels, GlnD hydrolyzes PII-UMP to PII and UMP (deuridylylation). Thus, controls uridylylation state and activity of the PII proteins, and plays an important role in the regulation of nitrogen assimilation and metabolism. The protein is Bifunctional uridylyltransferase/uridylyl-removing enzyme of Brucella abortus (strain S19).